Reading from the N-terminus, the 226-residue chain is Fibrillarin-like rRNA/tRNA 2'-O-methyltransferase (226 aa).

Residues 85–86 (TT), 104–105 (EF), 129–130 (DA), and 149–152 (DVAQ) contribute to the S-adenosyl-L-methionine site.

This sequence belongs to the methyltransferase superfamily. Fibrillarin family. Interacts with nop5. Component of box C/D small ribonucleoprotein (sRNP) particles that contain rpl7ae, FlpA and nop5, plus a guide RNA.

Functionally, involved in pre-rRNA and tRNA processing. Utilizes the methyl donor S-adenosyl-L-methionine to catalyze the site-specific 2'-hydroxyl methylation of ribose moieties in rRNA and tRNA. Site specificity is provided by a guide RNA that base pairs with the substrate. Methylation occurs at a characteristic distance from the sequence involved in base pairing with the guide RNA. The protein is Fibrillarin-like rRNA/tRNA 2'-O-methyltransferase of Thermococcus onnurineus (strain NA1).